The chain runs to 179 residues: ATP synthase subunit b (179 aa).

A helical transmembrane segment spans residues threonine 27–valine 47.

It belongs to the ATPase B chain family. As to quaternary structure, F-type ATPases have 2 components, F(1) - the catalytic core - and F(0) - the membrane proton channel. F(1) has five subunits: alpha(3), beta(3), gamma(1), delta(1), epsilon(1). F(0) has three main subunits: a(1), b(2) and c(10-14). The alpha and beta chains form an alternating ring which encloses part of the gamma chain. F(1) is attached to F(0) by a central stalk formed by the gamma and epsilon chains, while a peripheral stalk is formed by the delta and b chains.

The protein localises to the cell inner membrane. Its function is as follows. F(1)F(0) ATP synthase produces ATP from ADP in the presence of a proton or sodium gradient. F-type ATPases consist of two structural domains, F(1) containing the extramembraneous catalytic core and F(0) containing the membrane proton channel, linked together by a central stalk and a peripheral stalk. During catalysis, ATP synthesis in the catalytic domain of F(1) is coupled via a rotary mechanism of the central stalk subunits to proton translocation. Functionally, component of the F(0) channel, it forms part of the peripheral stalk, linking F(1) to F(0). This is ATP synthase subunit b from Anaeromyxobacter dehalogenans (strain 2CP-C).